Here is a 258-residue protein sequence, read N- to C-terminus: Aspartate/glutamate leucyltransferase (258 aa).

This sequence belongs to the R-transferase family. Bpt subfamily.

It localises to the cytoplasm. The enzyme catalyses N-terminal L-glutamyl-[protein] + L-leucyl-tRNA(Leu) = N-terminal L-leucyl-L-glutamyl-[protein] + tRNA(Leu) + H(+). It carries out the reaction N-terminal L-aspartyl-[protein] + L-leucyl-tRNA(Leu) = N-terminal L-leucyl-L-aspartyl-[protein] + tRNA(Leu) + H(+). Functionally, functions in the N-end rule pathway of protein degradation where it conjugates Leu from its aminoacyl-tRNA to the N-termini of proteins containing an N-terminal aspartate or glutamate. This chain is Aspartate/glutamate leucyltransferase, found in Rhodopseudomonas palustris (strain ATCC BAA-98 / CGA009).